Here is a 779-residue protein sequence, read N- to C-terminus: Ribosome-releasing factor 2, mitochondrial (779 aa).

In terms of domain architecture, tr-type G spans 68-353; that stretch reads AKIRNIGIMA…AVTTYLPSPE (286 aa). GTP-binding positions include 77 to 84, 141 to 145, and 195 to 198; these read AHIDAGKT, DTPGH, and NKMD.

Belongs to the TRAFAC class translation factor GTPase superfamily. Classic translation factor GTPase family. EF-G/EF-2 subfamily.

The protein localises to the mitochondrion. It catalyses the reaction GTP + H2O = GDP + phosphate + H(+). Its function is as follows. Mitochondrial GTPase that mediates the disassembly of ribosomes from messenger RNA at the termination of mitochondrial protein biosynthesis. Acts in collaboration with MRRF. GTP hydrolysis follows the ribosome disassembly and probably occurs on the ribosome large subunit. Not involved in the GTP-dependent ribosomal translocation step during translation elongation. The sequence is that of Ribosome-releasing factor 2, mitochondrial (Gfm2) from Mus musculus (Mouse).